A 265-amino-acid polypeptide reads, in one-letter code: MLLWPLRGWAARALRCFGPGSRGSPASGPGPRRVQRRAWPPDKEQEKEKKSVICVEGNIASGKTTCLEFFSNATDVEVLTEPVSKWRNVRGHNPLGLMYHDASRWGLTLQTYVQLTMLDRHTRPQVSSVRLMERSIHSARYIFVENLYRSGKMPEVDYVVLSEWFDWILRNMDVSVDLIVYLRTNPETCYQRLKKRCREEEKVIPLEYLEAIHHLHEEWLIKGSLFPMAAPVLVIEADHHMERMLELFEQNRDRILTPENRKHCP.

A mitochondrion-targeting transit peptide spans 1-33 (MLLWPLRGWAARALRCFGPGSRGSPASGPGPRR). The span at 20–32 (GSRGSPASGPGPR) shows a compositional bias: low complexity. The tract at residues 20-47 (GSRGSPASGPGPRRVQRRAWPPDKEQEK) is disordered. 57–65 (GNIASGKTT) provides a ligand contact to ATP. Glu133 serves as the catalytic Proton acceptor.

This sequence belongs to the DCK/DGK family. As to quaternary structure, monomer. Predominantly expressed in liver, pancreas, muscle, and brain.

It is found in the mitochondrion. It carries out the reaction thymidine + ATP = dTMP + ADP + H(+). It catalyses the reaction 2'-deoxycytidine + ATP = dCMP + ADP + H(+). The enzyme catalyses 2'-deoxyuridine + ATP = dUMP + ADP + H(+). Its function is as follows. Phosphorylates thymidine, deoxycytidine, and deoxyuridine in the mitochondrial matrix. In non-replicating cells, where cytosolic dNTP synthesis is down-regulated, mtDNA synthesis depends solely on TK2 and DGUOK. Widely used as target of antiviral and chemotherapeutic agents. This is Thymidine kinase 2, mitochondrial from Homo sapiens (Human).